We begin with the raw amino-acid sequence, 123 residues long: Large ribosomal subunit protein uL14 (123 aa).

The protein belongs to the universal ribosomal protein uL14 family. In terms of assembly, part of the 50S ribosomal subunit. Forms a cluster with proteins L3 and L19. In the 70S ribosome, L14 and L19 interact and together make contacts with the 16S rRNA in bridges B5 and B8.

Its function is as follows. Binds to 23S rRNA. Forms part of two intersubunit bridges in the 70S ribosome. The chain is Large ribosomal subunit protein uL14 from Koribacter versatilis (strain Ellin345).